The following is a 416-amino-acid chain: Putative competence-damage inducible protein (416 aa).

It belongs to the CinA family.

The chain is Putative competence-damage inducible protein from Bacillus pumilus (strain SAFR-032).